The sequence spans 427 residues: Chaperone SurA (427 aa).

The N-terminal stretch at 1 to 19 (MKIWKSILFTTLLSCGAVA) is a signal peptide. PpiC domains lie at 170–268 (TVQY…KIED) and 277–377 (VTEV…EVLD).

Its subcellular location is the periplasm. It catalyses the reaction [protein]-peptidylproline (omega=180) = [protein]-peptidylproline (omega=0). Functionally, chaperone involved in the correct folding and assembly of outer membrane proteins. Recognizes specific patterns of aromatic residues and the orientation of their side chains, which are found more frequently in integral outer membrane proteins. May act in both early periplasmic and late outer membrane-associated steps of protein maturation. This chain is Chaperone SurA, found in Vibrio parahaemolyticus serotype O3:K6 (strain RIMD 2210633).